Here is a 140-residue protein sequence, read N- to C-terminus: Large ribosomal subunit protein uL11 (140 aa).

The protein belongs to the universal ribosomal protein uL11 family. As to quaternary structure, part of the ribosomal stalk of the 50S ribosomal subunit. Interacts with L10 and the large rRNA to form the base of the stalk. L10 forms an elongated spine to which L12 dimers bind in a sequential fashion forming a multimeric L10(L12)X complex. Post-translationally, one or more lysine residues are methylated.

In terms of biological role, forms part of the ribosomal stalk which helps the ribosome interact with GTP-bound translation factors. The chain is Large ribosomal subunit protein uL11 from Solidesulfovibrio magneticus (strain ATCC 700980 / DSM 13731 / RS-1) (Desulfovibrio magneticus).